Consider the following 1052-residue polypeptide: Membrane-bound transcription factor site-1 protease (1052 aa).

The first 17 residues, 1 to 17 (MKLVSTWLLVLVVLLCG), serve as a signal peptide directing secretion. The propeptide occupies 18 to 186 (KRHLGDRLGT…TGRHSSRRLL (169 aa)). Asn148 carries an N-linked (GlcNAc...) asparagine glycan. Residue Ser168 is modified to Phosphoserine. The Lumenal portion of the chain corresponds to 187–999 (RAIPRQVAQT…MPGRYNQEVG (813 aa)). The 283-residue stretch at 190–472 (PRQVAQTLQA…HGKLDLLRAY (283 aa)) folds into the Peptidase S8 domain. Catalysis depends on Asp218, which acts as the Charge relay system. An N-linked (GlcNAc...) asparagine glycan is attached at Asn236. Catalysis depends on His249, which acts as the Charge relay system. A glycan (N-linked (GlcNAc...) asparagine) is linked at Asn305. Ser414 (charge relay system) is an active-site residue. 2 N-linked (GlcNAc...) asparagine glycosylation sites follow: Asn515 and Asn728. Residues 877 to 887 (PSLSHSGNRQR) are compositionally biased toward polar residues. Residues 877–900 (PSLSHSGNRQRPPSGAGLAPPERM) are disordered. An N-linked (GlcNAc...) asparagine glycan is attached at Asn939. Residues 1000-1022 (QTIPVFAFLGAMVALAFFVVQIS) form a helical membrane-spanning segment. Over 1023-1052 (KAKSRPKRRRPRAKRPQLAQQAHPARTPSV) the chain is Cytoplasmic. The span at 1026-1037 (SRPKRRRPRAKR) shows a compositional bias: basic residues. Residues 1026-1052 (SRPKRRRPRAKRPQLAQQAHPARTPSV) form a disordered region.

Belongs to the peptidase S8 family. Interacts with LYSET; this interaction bridges GNPTAB to MBTPS1. It depends on Ca(2+) as a cofactor. The 148 kDa zymogen is processed progressively into two membrane-bound 120 and 106 kDa forms in the endoplasmic reticulum, and late into a secreted 98 kDa form. The propeptide is autocatalytically removed through an intramolecular cleavage after Leu-186. Further cleavage generates 14, 10, and 8 kDa intermediates.

The protein resides in the endoplasmic reticulum membrane. It localises to the golgi apparatus membrane. It carries out the reaction Processes precursors containing basic and hydrophobic/aliphatic residues at P4 and P2, respectively, with a relatively relaxed acceptance of amino acids at P1 and P3.. Inhibited by divalent copper and zinc ions, but not by nickel or cobalt. Inhibited by its prosegment, but not smaller fragments. Inhibited by 4-(2-aminoethyl)benzenesulfonyl fluoride (AEBSF), a serine protease inhibitor. Serine protease that cleaves after hydrophobic or small residues, provided that Arg or Lys is in position P4: known substrates include SREBF1/SREBP1, SREBF2/SREBP2, BDNF, GNPTAB, ATF6, ATF6B and FAM20C. Cleaves substrates after Arg-Ser-Val-Leu (SREBP2), Arg-His-Leu-Leu (ATF6), Arg-Gly-Leu-Thr (BDNF) and its own propeptide after Arg-Arg-Leu-Leu. Catalyzes the first step regulated intramembrane proteolysis activation of the sterol regulatory element-binding proteins (SREBPs) SREBF1/SREBP1 and SREBF2/SREBP2. Also mediates the first step of the regulated intramembrane proteolytic activation of the cyclic AMP-dependent transcription factor ATF-6 (ATF6 and ATF6B). Mediates the protein cleavage of GNPTAB into subunit alpha and beta, thereby participating in biogenesis of lysosomes. Cleaves the propeptide from FAM20C which is required for FAM20C secretion from the Golgi apparatus membrane and for enhancement of FAM20C kinase activity, promoting osteoblast differentiation and biomineralization. Involved in the regulation of M6P-dependent Golgi-to-lysosome trafficking of lysosomal enzymes. It is required for the activation of CREB3L2/BBF2H7, a transcriptional activator of MIA3/TANGO and other genes controlling mega vesicle formation. Therefore, it plays a key role in the regulation of mega vesicle-mediated collagen trafficking. In astrocytes and osteoblasts, upon DNA damage and ER stress, mediates the first step of the regulated intramembrane proteolytic activation of the transcription factor CREB3L1, leading to the inhibition of cell-cycle progression. The protein is Membrane-bound transcription factor site-1 protease (Mbtps1) of Mus musculus (Mouse).